A 217-amino-acid polypeptide reads, in one-letter code: Probable GTP-binding protein EngB (217 aa).

The region spanning 27 to 201 (TGIEVAFAGR…RDKLDTWFSE (175 aa)) is the EngB-type G domain. GTP-binding positions include 35-42 (GRSNAGKS), 62-66 (GRTQL), 80-83 (DLPG), 147-150 (TKAD), and 180-182 (FSS). Residues S42 and T64 each coordinate Mg(2+).

This sequence belongs to the TRAFAC class TrmE-Era-EngA-EngB-Septin-like GTPase superfamily. EngB GTPase family. It depends on Mg(2+) as a cofactor.

In terms of biological role, necessary for normal cell division and for the maintenance of normal septation. This is Probable GTP-binding protein EngB from Edwardsiella ictaluri (strain 93-146).